Reading from the N-terminus, the 513-residue chain is ATP synthase subunit alpha (513 aa).

169-176 (GDRQTGKT) serves as a coordination point for ATP.

This sequence belongs to the ATPase alpha/beta chains family. F-type ATPases have 2 components, CF(1) - the catalytic core - and CF(0) - the membrane proton channel. CF(1) has five subunits: alpha(3), beta(3), gamma(1), delta(1), epsilon(1). CF(0) has three main subunits: a(1), b(2) and c(9-12). The alpha and beta chains form an alternating ring which encloses part of the gamma chain. CF(1) is attached to CF(0) by a central stalk formed by the gamma and epsilon chains, while a peripheral stalk is formed by the delta and b chains.

It localises to the cell inner membrane. The enzyme catalyses ATP + H2O + 4 H(+)(in) = ADP + phosphate + 5 H(+)(out). In terms of biological role, produces ATP from ADP in the presence of a proton gradient across the membrane. The alpha chain is a regulatory subunit. The sequence is that of ATP synthase subunit alpha from Aliivibrio fischeri (strain ATCC 700601 / ES114) (Vibrio fischeri).